A 341-amino-acid chain; its full sequence is Protein phosphatase methylesterase 1 (341 aa).

Positions 1–24 (MAFRKEELSQTLYENESEQSSETK) are disordered. Residues 9-20 (SQTLYENESEQS) are compositionally biased toward polar residues. Residues Ser153, Asp178, and His304 contribute to the active site.

The protein belongs to the AB hydrolase superfamily.

The enzyme catalyses [phosphatase 2A protein]-C-terminal L-leucine methyl ester + H2O = [phosphatase 2A protein]-C-terminal L-leucine + methanol + H(+). Its function is as follows. Demethylates proteins that have been reversibly carboxymethylated. Demethylates the phosphatase PP2A catalytic subunit. This is Protein phosphatase methylesterase 1 (ppe1) from Schizosaccharomyces pombe (strain 972 / ATCC 24843) (Fission yeast).